A 557-amino-acid chain; its full sequence is Dihydroxy-acid dehydratase (557 aa).

Cysteine 50 contributes to the [2Fe-2S] cluster binding site. Aspartate 82 serves as a coordination point for Mg(2+). Position 123 (cysteine 123) interacts with [2Fe-2S] cluster. Aspartate 124 and lysine 125 together coordinate Mg(2+). Lysine 125 carries the N6-carboxylysine modification. [2Fe-2S] cluster is bound at residue cysteine 195. Glutamate 447 is a Mg(2+) binding site. Serine 473 functions as the Proton acceptor in the catalytic mechanism.

This sequence belongs to the IlvD/Edd family. Homodimer. [2Fe-2S] cluster serves as cofactor. It depends on Mg(2+) as a cofactor.

The enzyme catalyses (2R)-2,3-dihydroxy-3-methylbutanoate = 3-methyl-2-oxobutanoate + H2O. The catalysed reaction is (2R,3R)-2,3-dihydroxy-3-methylpentanoate = (S)-3-methyl-2-oxopentanoate + H2O. The protein operates within amino-acid biosynthesis; L-isoleucine biosynthesis; L-isoleucine from 2-oxobutanoate: step 3/4. It participates in amino-acid biosynthesis; L-valine biosynthesis; L-valine from pyruvate: step 3/4. In terms of biological role, functions in the biosynthesis of branched-chain amino acids. Catalyzes the dehydration of (2R,3R)-2,3-dihydroxy-3-methylpentanoate (2,3-dihydroxy-3-methylvalerate) into 2-oxo-3-methylpentanoate (2-oxo-3-methylvalerate) and of (2R)-2,3-dihydroxy-3-methylbutanoate (2,3-dihydroxyisovalerate) into 2-oxo-3-methylbutanoate (2-oxoisovalerate), the penultimate precursor to L-isoleucine and L-valine, respectively. The chain is Dihydroxy-acid dehydratase from Burkholderia mallei (strain NCTC 10247).